Reading from the N-terminus, the 270-residue chain is Thiazole synthase (270 aa).

K111 functions as the Schiff-base intermediate with DXP in the catalytic mechanism. Residues G172, 198 to 199 (AG), and 220 to 221 (NS) contribute to the 1-deoxy-D-xylulose 5-phosphate site. The interval 249 to 270 (AGRLPTRAQASPSSPTTGKVND) is disordered. Positions 256–270 (AQASPSSPTTGKVND) are enriched in polar residues.

This sequence belongs to the ThiG family. Homotetramer. Forms heterodimers with either ThiH or ThiS.

It is found in the cytoplasm. It catalyses the reaction [ThiS sulfur-carrier protein]-C-terminal-Gly-aminoethanethioate + 2-iminoacetate + 1-deoxy-D-xylulose 5-phosphate = [ThiS sulfur-carrier protein]-C-terminal Gly-Gly + 2-[(2R,5Z)-2-carboxy-4-methylthiazol-5(2H)-ylidene]ethyl phosphate + 2 H2O + H(+). It participates in cofactor biosynthesis; thiamine diphosphate biosynthesis. Functionally, catalyzes the rearrangement of 1-deoxy-D-xylulose 5-phosphate (DXP) to produce the thiazole phosphate moiety of thiamine. Sulfur is provided by the thiocarboxylate moiety of the carrier protein ThiS. In vitro, sulfur can be provided by H(2)S. In Synechococcus sp. (strain WH7803), this protein is Thiazole synthase.